A 398-amino-acid polypeptide reads, in one-letter code: MSQLKYLITFSILLRFGFFFFGLYQDEYMPVKYTDIDYLVFNDASKFVYQGLSPYLRETYRYTPILAILLIPDNFGKYWYHFGKLLFMVSDVITGLIILKLLSKQQQLSEKKKMILSSIWLLNPMVITISTRGSAESVLTVMIMLSLYYLLDKDNVILSAIWLGLSIHFKIYPIIYLPSILYYLSSQETPFLASVPGINLVNAKNLKYIIITLTTLAVVNYLMFLKYGWEFIDNSYLYHVTRLDHRHNFSVYNMVLYYKSALLEDSNGFDIEKIAFVPQLLLSAVIIPLIFAKEDLISSLFIQTFVFVAFNKVITSQYFIWFLIFLPHFLSKTKLLTTDKITGISCLLLWIISQATWLYFAYKLEFLGENTFDNGLMYSSVFFFLSNCWCTMKFIQSL.

A run of 9 helical transmembrane segments spans residues 4–24, 79–99, 114–136, 156–176, 209–229, 271–291, 305–325, 341–361, and 375–395; these read LKYLITFSILLRFGFFFFGLY, WYHFGKLLFMVSDVITGLIIL, MILSSIWLLNPMVITISTRGSAE, VILSAIWLGLSIHFKIYPIIY, IIITLTTLAVVNYLMFLKYGW, IEKIAFVPQLLLSAVIIPLIF, FVFVAFNKVITSQYFIWFLIF, ITGISCLLLWIISQATWLYFA, and GLMYSSVFFFLSNCWCTMKFI.

This sequence belongs to the PIGM family.

The protein resides in the endoplasmic reticulum membrane. Its pathway is glycolipid biosynthesis; glycosylphosphatidylinositol-anchor biosynthesis. Functionally, mannosyltransferase involved in glycosylphosphatidylinositol-anchor biosynthesis. Transfers the first alpha-1,4-mannose to GlcN-acyl-PI during GPI precursor assembly. Required for cell wall integrity. The polypeptide is GPI mannosyltransferase 1 (GPI14) (Candida albicans (strain SC5314 / ATCC MYA-2876) (Yeast)).